Reading from the N-terminus, the 247-residue chain is MVLCCVFLLFLTGSFAQDVGTIVTSDLFNEMLKNRNDDRCPAKGFYTYDAFIAAANSFPGFGTTGDDTARKKEIAAFFGQTSHETTGGSLSADGPFAGGYCFVREGNQMGSGFYGRGPIQLTGQSNYDLAGQAIGQDLVNNPDLVATDATVSFKTAIWFWMTAQGNKPSCHDVITGQWTPSAADASANRQPGYGVITNIINGGIECGKGQNPQVEDRIGFYRRYCTILNVAPGDNLDCYDQRNFAEA.

The N-terminal stretch at 1 to 16 (MVLCCVFLLFLTGSFA) is a signal peptide. Glu84 (proton donor) is an active-site residue. Cys206 and Cys238 are disulfide-bonded.

The protein belongs to the glycosyl hydrolase 19 family. Chitinase class II subfamily.

The protein localises to the secreted. It is found in the extracellular space. It catalyses the reaction Random endo-hydrolysis of N-acetyl-beta-D-glucosaminide (1-&gt;4)-beta-linkages in chitin and chitodextrins.. Its function is as follows. Defense against chitin-containing fungal pathogens. The protein is Acidic 27 kDa endochitinase (CHI17) of Solanum lycopersicum (Tomato).